The following is a 124-amino-acid chain: MATTPLPNALSAYRLLLRATRIAFQGDFTTLHAARAEARKHFDQNRRLGVDTPKHIQHAVETAEILRTNVVQGVRVEGSGEAGKGEERYELRIHEHIERGDNDTIKTAGNKRIKAAVGKTCSQS.

It belongs to the complex I LYR family. MZM1 subfamily. As to quaternary structure, interacts with RIP1.

Its subcellular location is the mitochondrion matrix. Its function is as follows. Assembly factor required for Rieske Fe-S protein RIP1 incorporation into the cytochrome b-c1 (CIII) complex. Functions as a chaperone, binding to this subunit within the mitochondrial matrix and stabilizing it prior to its translocation and insertion into the late CIII dimeric intermediate within the mitochondrial inner membrane. Modulates the mitochondrial matrix zinc pool. This is Mitochondrial zinc maintenance protein 1, mitochondrial (MZM1) from Paracoccidioides lutzii (strain ATCC MYA-826 / Pb01) (Paracoccidioides brasiliensis).